We begin with the raw amino-acid sequence, 111 residues long: Probable 4-amino-4-deoxy-L-arabinose-phosphoundecaprenol flippase subunit ArnE (111 aa).

The Cytoplasmic segment spans residues 1–35; it reads MIWLTLVFASLLSVAGQLCQKQATCFVAISKRRKH. A helical transmembrane segment spans residues 36–56; that stretch reads IVLWLGLALACLGLAMVLWLL. In terms of domain architecture, EamA spans 40-109; that stretch reads LGLALACLGL…IIGGIVILGS (70 aa). At 57 to 60 the chain is on the periplasmic side; it reads VLQN. The helical transmembrane segment at 61–81 threads the bilayer; it reads VPVGIAYPMLSLNFVWVTLAA. Topologically, residues 82 to 87 are cytoplasmic; that stretch reads VKLWHE. Residues 88–108 form a helical membrane-spanning segment; sequence PVSPRHWCGVAFIIGGIVILG. Residues 109–111 are Periplasmic-facing; the sequence is STV.

It belongs to the ArnE family. In terms of assembly, heterodimer of ArnE and ArnF.

Its subcellular location is the cell inner membrane. The protein operates within bacterial outer membrane biogenesis; lipopolysaccharide biosynthesis. Its function is as follows. Translocates 4-amino-4-deoxy-L-arabinose-phosphoundecaprenol (alpha-L-Ara4N-phosphoundecaprenol) from the cytoplasmic to the periplasmic side of the inner membrane. The sequence is that of Probable 4-amino-4-deoxy-L-arabinose-phosphoundecaprenol flippase subunit ArnE from Escherichia coli O157:H7.